We begin with the raw amino-acid sequence, 325 residues long: Phospho-N-acetylmuramoyl-pentapeptide-transferase (325 aa).

9 consecutive transmembrane segments (helical) span residues 7 to 27, 57 to 77, 81 to 101, 122 to 142, 146 to 166, 186 to 206, 227 to 247, 252 to 272, and 302 to 322; these read LFVLILSFAAAVIMSPLFIPF, IVIVLSIFISALAIGIAITGF, LLLLMVVTLGYGIVGFVDDYL, VIAAIFYIGLLAIGFDTFIAI, TFGFDLGWLYLILIVLMLLGA, IAFGAFAILAWSGGFIDTALF, VFMGDTGSLALGGAIAAIAIL, LMLIIVGGVFVIETLSVIIQV, and VVVTFWLVGMIFAIMGVYIGV.

This sequence belongs to the glycosyltransferase 4 family. MraY subfamily. Mg(2+) serves as cofactor.

It is found in the cell membrane. It carries out the reaction UDP-N-acetyl-alpha-D-muramoyl-L-alanyl-gamma-D-glutamyl-meso-2,6-diaminopimeloyl-D-alanyl-D-alanine + di-trans,octa-cis-undecaprenyl phosphate = di-trans,octa-cis-undecaprenyl diphospho-N-acetyl-alpha-D-muramoyl-L-alanyl-D-glutamyl-meso-2,6-diaminopimeloyl-D-alanyl-D-alanine + UMP. It participates in cell wall biogenesis; peptidoglycan biosynthesis. Functionally, catalyzes the initial step of the lipid cycle reactions in the biosynthesis of the cell wall peptidoglycan: transfers peptidoglycan precursor phospho-MurNAc-pentapeptide from UDP-MurNAc-pentapeptide onto the lipid carrier undecaprenyl phosphate, yielding undecaprenyl-pyrophosphoryl-MurNAc-pentapeptide, known as lipid I. The chain is Phospho-N-acetylmuramoyl-pentapeptide-transferase from Shouchella clausii (strain KSM-K16) (Alkalihalobacillus clausii).